The following is a 545-amino-acid chain: Probable target of rapamycin complex 2 subunit BIT2 (545 aa).

2 disordered regions span residues 1–24 (MATD…PNIK) and 78–166 (DGSN…GTSS). 3 stretches are compositionally biased toward polar residues: residues 11-24 (ATSG…PNIK), 106-130 (IGSS…SNSR), and 151-166 (RSGS…GTSS).

In terms of assembly, interacts with the target of rapamycin complex 2 (TORC2) subunit TSC11 and the TORC2 effectors SLM1 and SLM2.

This is Probable target of rapamycin complex 2 subunit BIT2 (BIT2) from Saccharomyces cerevisiae (strain ATCC 204508 / S288c) (Baker's yeast).